A 577-amino-acid chain; its full sequence is Moesin (577 aa).

Residues 2-295 form the FERM domain; that stretch reads PKTINVRVTT…GNHELYMRRR (294 aa). Position 74 is a phosphoserine (Ser74). Residue Lys79 is modified to N6-acetyllysine. Position 83 is an N6-succinyllysine (Lys83). Positions 115–120 match the [IL]-x-C-x-x-[DE] motif motif; the sequence is IYCPPE. Position 116 is a phosphotyrosine (Tyr116). Cys117 is subject to S-nitrosocysteine. Residues Lys139 and Lys165 each carry the N6-acetyllysine modification. The span at 375–401 shows a compositional bias: basic and acidic residues; that stretch reads LEQERKRAQSEAEKLAKERQEAEEAKE. Disordered regions lie at residues 375–409 and 466–518; these read LEQE…ASQD and AMST…NERV. Ser407 carries the phosphoserine modification. Residues 476-487 show a composition bias toward acidic residues; sequence AENEQDEQDENG. The span at 492–518 shows a compositional bias: basic and acidic residues; sequence AELRADAMAKDRSEEERTTEAEKNERV. Ser527 carries the phosphoserine modification. Thr558 is modified (phosphothreonine; by ROCK2 and STK10).

In terms of assembly, in resting T-cells, part of a PAG1-NHERF1-MSN complex which is disrupted upon TCR activation. Interacts with NHERF1. Interacts with PPP1R16B. Interacts with PDZD8. Interacts with SELPLG and SYK; these interactions mediate the activation of SYK by SELPLG. Interacts with PDPN (via cytoplasmic domain); this interaction activates RHOA and promotes epithelial-mesenchymal transition. Interacts with SPN/CD43 cytoplasmic tail. Interacts with CD44. Interacts with ICAM2. Interacts with ICAM3 (via C-terminus). Interacts with PDZD8. Interacts with F-actin. Interacts with CD46. Interacts with PTPN6. Phosphorylation on Thr-558 is crucial for the formation of microvilli-like structures. Phosphorylation by ROCK2 suppresses the head-to-tail association of the N-terminal and C-terminal halves resulting in an opened conformation which is capable of actin and membrane-binding. Phosphorylation on Thr-558 by STK10 negatively regulates lymphocyte migration and polarization. In terms of processing, S-nitrosylation of Cys-117 is induced by interferon-gamma and oxidatively-modified low-densitity lipoprotein (LDL(ox)) implicating the iNOS-S100A8/9 transnitrosylase complex.

It is found in the cell membrane. The protein localises to the cytoplasm. Its subcellular location is the cytoskeleton. The protein resides in the apical cell membrane. It localises to the cell projection. It is found in the microvillus membrane. The protein localises to the microvillus. A head-to-tail association, of the N-terminal and C-terminal halves results in a closed conformation (inactive form) which is incapable of actin or membrane-binding. Its function is as follows. Ezrin-radixin-moesin (ERM) family protein that connects the actin cytoskeleton to the plasma membrane and thereby regulates the structure and function of specific domains of the cell cortex. Tethers actin filaments by oscillating between a resting and an activated state providing transient interactions between moesin and the actin cytoskeleton. Once phosphorylated on its C-terminal threonine, moesin is activated leading to interaction with F-actin and cytoskeletal rearrangement. These rearrangements regulate many cellular processes, including cell shape determination, membrane transport, and signal transduction. The role of moesin is particularly important in immunity acting on both T and B-cells homeostasis and self-tolerance, regulating lymphocyte egress from lymphoid organs. Modulates phagolysosomal biogenesis in macrophages. Participates also in immunologic synapse formation. This Bos taurus (Bovine) protein is Moesin.